The primary structure comprises 195 residues: Small ribosomal subunit protein uS4c (195 aa).

Positions 82 to 143 (MRLDNILFRL…KQRSKALIQN (62 aa)) constitute an S4 RNA-binding domain.

Belongs to the universal ribosomal protein uS4 family. In terms of assembly, part of the 30S ribosomal subunit. Contacts protein S5. The interaction surface between S4 and S5 is involved in control of translational fidelity.

The protein resides in the plastid. It localises to the chloroplast. One of the primary rRNA binding proteins, it binds directly to 16S rRNA where it nucleates assembly of the body of the 30S subunit. Functionally, with S5 and S12 plays an important role in translational accuracy. In Pillansia templemannii, this protein is Small ribosomal subunit protein uS4c (rps4).